A 399-amino-acid polypeptide reads, in one-letter code: Elongation factor Tu (399 aa).

The tr-type G domain occupies 10–204 (KDHVNIGTIG…AVDDYIDTPE (195 aa)). The G1 stretch occupies residues 19 to 26 (GHVDHGKT). 19–26 (GHVDHGKT) is a GTP binding site. Thr26 is a Mg(2+) binding site. Positions 60–64 (GITIN) are G2. The G3 stretch occupies residues 81-84 (DCPG). GTP is bound by residues 81-85 (DCPGH) and 136-139 (NKKD). Residues 136 to 139 (NKKD) form a G4 region. The G5 stretch occupies residues 174–176 (SAL).

It belongs to the TRAFAC class translation factor GTPase superfamily. Classic translation factor GTPase family. EF-Tu/EF-1A subfamily. Monomer.

The protein resides in the cytoplasm. The enzyme catalyses GTP + H2O = GDP + phosphate + H(+). Functionally, GTP hydrolase that promotes the GTP-dependent binding of aminoacyl-tRNA to the A-site of ribosomes during protein biosynthesis. In Synechocystis sp. (strain ATCC 27184 / PCC 6803 / Kazusa), this protein is Elongation factor Tu.